Reading from the N-terminus, the 131-residue chain is Fumarate reductase subunit C (131 aa).

The next 3 membrane-spanning stretches (helical) occupy residues 30–50 (EGTAVPAVWFSIELIFGLFAL), 57–77 (WMGFVGFLQNPVVVILNLIAL), and 109–129 (IIKGLWVVTAVVTVVILYVAL).

Belongs to the FrdC family. Part of an enzyme complex containing four subunits: a flavoprotein (FrdA), an iron-sulfur protein (FrdB), and two hydrophobic anchor proteins (FrdC and FrdD).

It is found in the cell inner membrane. In terms of biological role, two distinct, membrane-bound, FAD-containing enzymes are responsible for the catalysis of fumarate and succinate interconversion; fumarate reductase is used in anaerobic growth, and succinate dehydrogenase is used in aerobic growth. Anchors the catalytic components of the fumarate reductase complex to the cell inner membrane, binds quinones. This Citrobacter koseri (strain ATCC BAA-895 / CDC 4225-83 / SGSC4696) protein is Fumarate reductase subunit C.